The chain runs to 147 residues: UPF0306 protein YhbP (147 aa).

The protein belongs to the UPF0306 family.

This Escherichia coli O157:H7 (strain EC4115 / EHEC) protein is UPF0306 protein YhbP.